The following is a 157-amino-acid chain: Endoribonuclease YbeY (157 aa).

H114, H118, and H124 together coordinate Zn(2+).

It belongs to the endoribonuclease YbeY family. Requires Zn(2+) as cofactor.

Its subcellular location is the cytoplasm. Functionally, single strand-specific metallo-endoribonuclease involved in late-stage 70S ribosome quality control and in maturation of the 3' terminus of the 16S rRNA. In Salmonella dublin (strain CT_02021853), this protein is Endoribonuclease YbeY.